The chain runs to 308 residues: Protein translocase subunit SecF (308 aa).

Transmembrane regions (helical) follow at residues 22–42 (AVSY…IGIY), 140–160 (IEAG…YIWV), 164–184 (WYFG…ALGF), 194–214 (LSTI…SVVI), 246–266 (ILTV…GGEA), and 272–292 (VLVF…SAPI).

Belongs to the SecD/SecF family. SecF subfamily. Forms a complex with SecD. Part of the essential Sec protein translocation apparatus which comprises SecA, SecYEG and auxiliary proteins SecDF-YajC and YidC.

It localises to the cell inner membrane. Part of the Sec protein translocase complex. Interacts with the SecYEG preprotein conducting channel. SecDF uses the proton motive force (PMF) to complete protein translocation after the ATP-dependent function of SecA. This chain is Protein translocase subunit SecF, found in Rickettsia akari (strain Hartford).